Here is a 196-residue protein sequence, read N- to C-terminus: SAGA-associated factor 11 homolog (196 aa).

The tract at residues 1–22 is disordered; that stretch reads MSAANMPTTTGAQGSGNQVPTT. The SGF11-type zinc-finger motif lies at 106–127; that stretch reads CTCPNCDRLVAAARFAPHLEKC. Residues 141–196 are disordered; it reads RLATKEGATSAHLHSSGNTGGTDDEDDVDWSSDKRRKKSNQNSRNNGSKKNNGKTF. Serine 172 is subject to Phosphoserine. The span at 180-196 shows a compositional bias: low complexity; sequence NQNSRNNGSKKNNGKTF.

This sequence belongs to the SGF11 family. Component of some SAGA transcription coactivator-HAT complexes, at least composed of Ada2b, not/nonstop, Pcaf/Gcn5, Sgf11 and Spt3. Within the SAGA complex, Sgf11, e(y)2, and not/nonstop form an additional subcomplex of SAGA called the DUB module (deubiquitination module). Interacts directly with not/nonstop. Interacts with the AMEX complex component xmas-2. Interacts with Cbp80; important for promoter recruitment of Sgf11 that is not associated with the DUB module.

It localises to the nucleus. Its subcellular location is the nucleoplasm. It is found in the cytoplasm. Component of the transcription regulatory histone acetylation (HAT) complex SAGA, a multiprotein complex that activates transcription by remodeling chromatin and mediating histone acetylation and deubiquitination. Within the SAGA complex, participates in a subcomplex that specifically deubiquitinates histone H2B. The SAGA complex is recruited to specific gene promoters by activators, where it is required for transcription. Required for nuclear receptor-mediated transactivation. Binds independently on SAGA to promoters in an RNA-dependent manner. Binds to mRNA and is essential for total mRNA export from the nucleus. Required to counteract heterochromatin silencing. Controls the development of neuronal connectivity in visual system by being required for accurate axon targeting in the optic lobe. Required for expression of ecdysone-induced genes such as br/broad. In Drosophila simulans (Fruit fly), this protein is SAGA-associated factor 11 homolog.